We begin with the raw amino-acid sequence, 412 residues long: D-xylonate dehydratase (412 aa).

In terms of assembly, homooctamer.

It carries out the reaction D-xylonate = 2-dehydro-3-deoxy-D-arabinonate + H2O. Its function is as follows. NADP-dependent D-xylose dehydrogenase involved in the degradation of D-xylose, a major component of hemicelluloses such as xylan. Catalyzes the third reaction in the xylose utilization pathway through dehydratation of D-xylonate into 2-dehydro-3-deoxy-D-xylonate. This is D-xylonate dehydratase from Haloferax volcanii (strain ATCC 29605 / DSM 3757 / JCM 8879 / NBRC 14742 / NCIMB 2012 / VKM B-1768 / DS2) (Halobacterium volcanii).